A 70-amino-acid chain; its full sequence is Small ribosomal subunit protein bS21 (70 aa).

Belongs to the bacterial ribosomal protein bS21 family.

In Herminiimonas arsenicoxydans, this protein is Small ribosomal subunit protein bS21.